Here is a 469-residue protein sequence, read N- to C-terminus: ATP synthase subunit beta (469 aa).

153–160 (GGAGVGKT) provides a ligand contact to ATP.

Belongs to the ATPase alpha/beta chains family. In terms of assembly, F-type ATPases have 2 components, CF(1) - the catalytic core - and CF(0) - the membrane proton channel. CF(1) has five subunits: alpha(3), beta(3), gamma(1), delta(1), epsilon(1). CF(0) has three main subunits: a(1), b(2) and c(9-12). The alpha and beta chains form an alternating ring which encloses part of the gamma chain. CF(1) is attached to CF(0) by a central stalk formed by the gamma and epsilon chains, while a peripheral stalk is formed by the delta and b chains.

The protein localises to the cell inner membrane. The enzyme catalyses ATP + H2O + 4 H(+)(in) = ADP + phosphate + 5 H(+)(out). Produces ATP from ADP in the presence of a proton gradient across the membrane. The catalytic sites are hosted primarily by the beta subunits. In Pseudothermotoga lettingae (strain ATCC BAA-301 / DSM 14385 / NBRC 107922 / TMO) (Thermotoga lettingae), this protein is ATP synthase subunit beta.